The chain runs to 326 residues: Protein SEH1 (326 aa).

WD repeat units follow at residues 7 to 46 (TLDS…SSTF), 54 to 95 (VSES…AHGL), 105 to 146 (NKSS…ELKN), 224 to 266 (DKGD…DLEG), and 278 to 317 (GHQG…EWHE).

Belongs to the WD repeat SEC13 family. In terms of assembly, part of the nuclear pore complex (NPC). The NPC has an eight-fold symmetrical structure comprising a central transport channel and two rings, the cytoplasmic and nuclear rings, to which eight filaments are attached. The cytoplasmic filaments have loose ends, while the nuclear filaments are joined in a distal ring, forming a nuclear basket. NPCs are highly dynamic in configuration and composition, and can be devided in 3 subcomplexes, the NUP62 subcomplex, the NUP107-160 subcomplex and the NUP93 subcomplex, containing approximately 30 different nucleoporin proteins.

The protein localises to the nucleus envelope. It localises to the nucleus. The protein resides in the cytoplasm. It is found in the nuclear pore complex. Its function is as follows. Required for proper export of mRNAs from the nucleus to the cytoplasm. This is Protein SEH1 from Arabidopsis thaliana (Mouse-ear cress).